The sequence spans 409 residues: Endoglucanase B (409 aa).

A signal peptide spans 1 to 21 (MKLKRIAALLTAAVMSVGVMA). Residues 23-66 (CGGSKSDDKSKADTKSAAETSGAEGDSSESEEIPVSQTHTNDPM) form a disordered region. Residues 27–38 (KSDDKSKADTKS) show a composition bias toward basic and acidic residues. The span at 57 to 66 (VSQTHTNDPM) shows a compositional bias: polar residues. The Proton donor role is filled by Glu-212. Glu-332 functions as the Nucleophile in the catalytic mechanism.

This sequence belongs to the glycosyl hydrolase 5 (cellulase A) family.

The enzyme catalyses Endohydrolysis of (1-&gt;4)-beta-D-glucosidic linkages in cellulose, lichenin and cereal beta-D-glucans.. This is Endoglucanase B (celB) from Ruminococcus albus.